Consider the following 124-residue polypeptide: V-type proton ATPase subunit F 1 (124 aa).

Ser87 is subject to Phosphoserine.

It belongs to the V-ATPase F subunit family. In terms of assembly, V-ATPase is a heteromultimeric enzyme made up of two complexes: the ATP-hydrolytic V1 complex and the proton translocation V0 complex. The V1 complex consists of three catalytic AB heterodimers that form a heterohexamer, three peripheral stalks each consisting of EG heterodimers, one central rotor including subunits D and F, and the regulatory subunits C and H. The proton translocation complex V0 consists of the proton transport subunit a, a ring of proteolipid subunits c9c'', rotary subunit d, subunits e and f, and the accessory subunits VhaAC45 and ATP6AP2.

Its function is as follows. Subunit of the V1 complex of vacuolar(H+)-ATPase (V-ATPase), a multisubunit enzyme composed of a peripheral complex (V1) that hydrolyzes ATP and a membrane integral complex (V0) that translocates protons. V-ATPase is responsible for acidifying and maintaining the pH of intracellular compartments and in some cell types, is targeted to the plasma membrane, where it is responsible for acidifying the extracellular environment. This chain is V-type proton ATPase subunit F 1 (Vha14-1), found in Drosophila melanogaster (Fruit fly).